The sequence spans 397 residues: Elongation factor Tu (397 aa).

The region spanning 10-207 (KPHVNVGTIG…TLDTYIPEPV (198 aa)) is the tr-type G domain. Residues 19-26 (GHVDHGKT) form a G1 region. 19-26 (GHVDHGKT) is a binding site for GTP. Threonine 26 is a binding site for Mg(2+). Positions 60–64 (GITIN) are G2. A G3 region spans residues 81–84 (DCPG). GTP-binding positions include 81 to 85 (DCPGH) and 136 to 139 (NKAD). A G4 region spans residues 136 to 139 (NKAD). The tract at residues 174-176 (SAL) is G5.

Belongs to the TRAFAC class translation factor GTPase superfamily. Classic translation factor GTPase family. EF-Tu/EF-1A subfamily. In terms of assembly, monomer.

Its subcellular location is the cytoplasm. The catalysed reaction is GTP + H2O = GDP + phosphate + H(+). In terms of biological role, GTP hydrolase that promotes the GTP-dependent binding of aminoacyl-tRNA to the A-site of ribosomes during protein biosynthesis. This Ectopseudomonas mendocina (strain ymp) (Pseudomonas mendocina) protein is Elongation factor Tu.